Here is a 69-residue protein sequence, read N- to C-terminus: Large ribosomal subunit protein uL30 (69 aa).

It belongs to the universal ribosomal protein uL30 family. As to quaternary structure, part of the 50S ribosomal subunit.

This Rhizobium etli (strain ATCC 51251 / DSM 11541 / JCM 21823 / NBRC 15573 / CFN 42) protein is Large ribosomal subunit protein uL30.